Here is a 236-residue protein sequence, read N- to C-terminus: Purine nucleoside phosphorylase DeoD-type (236 aa).

A purine D-ribonucleoside is bound at residue H5. Phosphate-binding positions include G21, R25, R44, and 88 to 91 (RVGS). A purine D-ribonucleoside contacts are provided by residues 180–182 (DME) and 204–205 (SD). D205 acts as the Proton donor in catalysis.

This sequence belongs to the PNP/UDP phosphorylase family. Homohexamer; trimer of homodimers.

The enzyme catalyses a purine D-ribonucleoside + phosphate = a purine nucleobase + alpha-D-ribose 1-phosphate. The catalysed reaction is a purine 2'-deoxy-D-ribonucleoside + phosphate = a purine nucleobase + 2-deoxy-alpha-D-ribose 1-phosphate. Catalyzes the reversible phosphorolytic breakdown of the N-glycosidic bond in the beta-(deoxy)ribonucleoside molecules, with the formation of the corresponding free purine bases and pentose-1-phosphate. The chain is Purine nucleoside phosphorylase DeoD-type from Aliivibrio salmonicida (strain LFI1238) (Vibrio salmonicida (strain LFI1238)).